The following is a 575-amino-acid chain: Jasmonoyl--L-amino acid synthetase JAR1 (575 aa).

Residues 10–30 are a coiled coil; sequence MNRVIDEFDEMTRNAHQVQKQ. Serine 98 contacts ATP. Jasmonate is bound at residue serine 101. ATP contacts are provided by residues methionine 118, threonine 121, glycine 163, asparagine 168, and 331–336; that span reads GSSEGW. 166 to 170 lines the an L-alpha-amino acid pocket; the sequence is TTNVY. 328 to 331 contacts jasmonate; that stretch reads HDYG. An an L-alpha-amino acid-binding site is contributed by 530 to 534; the sequence is KIQEH. Lysine 557 lines the ATP pocket.

The protein belongs to the IAA-amido conjugating enzyme family. In terms of assembly, interacts with GSTU20/FIP1 under continuous far red (cFR) light; this binding increases its activity and determines the priority of substrate binding.

The protein resides in the cytoplasm. The catalysed reaction is a jasmonate + an L-alpha-amino acid + ATP = a jasmonyl-L-amino acid + AMP + diphosphate + H(+). It carries out the reaction (+)-7-isojasmonate + L-isoleucine + ATP = L-isoleucine-(+)-7-isojasmonate + AMP + diphosphate + H(+). With respect to regulation, activated by GSTU20/FIP1. Catalyzes the synthesis of jasmonates-amino acid conjugates by adenylation; can use Ile and, in vitro at least, Val, Leu and Phe as conjugating amino acids on jasmonic acid (JA) and 9,10-dihydro-JA substrates, and to a lower extent, on 3-oxo-2-(2Z-pentenyl)-cyclopentane-1-butyric acid (OPC-4) and 12-hydroxy-JA (12-OH-JA). Can synthesize adenosine 5-tetraphosphate in vitro. Required for the JA-mediated signaling pathway that regulates many developmental and defense mechanisms, including growth root inhibition, vegetative storage proteins (VSPs) accumulation, induced systemic resistance (ISR), response to wounding and herbivores, tolerance to ozone O(3) (probably having a role in lesion containment). Plays an important role in the accumulation of JA-Ile in response to wounding, both locally and systemically; promotes JA responding genes especially in distal part of wounded plants, via the JA-Ile-stimulated degradation of JAZ repressor proteins by the SCF(COI)E3 ubiquitin-protein ligase pathway. Involved in the apoptosis-like programmed cell death (PCD) induced by fungal toxin fumonisin B1-mediated (FB1). Required for volatile compounds (C6-aldehydes and allo-ocimene)-mediated defense activation. Involved in the non-pathogenic rhizobacterium-mediated ISR (defense priming) by P.fluorescens (strains CHAOr and WCS417r) and P.putida LSW17S against infection leaf pathogens such as P.syringae pv. tomato and H.parasitica. Required for the JA-dependent resistance to fungi such as P.irregulare, U.vignae and U.appendiculatus. Necessary to induce systemic resistance against R.solanaceraum and P.syringae pv. tomato with P.oligandrum (a non-pathogenic biocontrol agent) cell wall protein fraction (CWP). Mediates PGIP2 accumulation in response to B.cinerea infection and thus contributes to resistance against this pathogen. Modulates the UV-B alteration of leaves attractiveness to diamondback moths P.xylostella leading to insect oviposition. Involved in the regulation of far-red light influence on development, being an actor of the interplay between light and JA signaling. Seems necessary for the salicylic acid (SA)-mediated, NPR1-independent resistance pathway. May contribute to the chitin-elicited pathway. Contributes to the sensitivity toward F.graminearum. The protein is Jasmonoyl--L-amino acid synthetase JAR1 of Arabidopsis thaliana (Mouse-ear cress).